A 1083-amino-acid polypeptide reads, in one-letter code: Probable arabinosyltransferase B (1083 aa).

13 helical membrane-spanning segments follow: residues 23–45 (VARWVAAIAGLIGFVSSVVTPLL), 222–239 (FAMMLAIITTVGALVALW), 252–274 (LIPARWSMFTLVDVAVIFGFLLW), 331–350 (SMWIRLPDLICGVACWLLLS), 357–379 (LGPAIVGFKPALWAAGLVLLAAW), 421–443 (TAAFTIGIQPTGLIAVAALLAGG), 456–478 (AVGAWPLVAPLLAAGTVVLTVVF), 525–542 (FGFLITALCLFTAVLITL), 555–572 (AWRLIGTILGTMFFLTFA), 576–598 (WVHHFGLFAALGAAVAALTTVLV), 611–633 (AFLAALLFVMTLCFATTNGWWYV), 648–670 (DGITFSTIFFILFAIVALYAYYL), and 690–712 (FWAPIPFAAGLMTLVFIGSMVAG).

Belongs to the emb family.

The protein localises to the cell membrane. In terms of biological role, arabinosyl transferase responsible for the polymerization of arabinose into the arabinan of arabinogalactan. The chain is Probable arabinosyltransferase B (embB) from Mycobacterium leprae (strain TN).